The primary structure comprises 384 residues: Succinyl-diaminopimelate desuccinylase (384 aa).

Position 71 (His-71) interacts with Zn(2+). Asp-73 is a catalytic residue. A Zn(2+)-binding site is contributed by Asp-104. Glu-138 functions as the Proton acceptor in the catalytic mechanism. Zn(2+) is bound by residues Glu-139, Glu-167, and His-353.

The protein belongs to the peptidase M20A family. DapE subfamily. As to quaternary structure, homodimer. It depends on Zn(2+) as a cofactor. Co(2+) is required as a cofactor.

It catalyses the reaction N-succinyl-(2S,6S)-2,6-diaminopimelate + H2O = (2S,6S)-2,6-diaminopimelate + succinate. It participates in amino-acid biosynthesis; L-lysine biosynthesis via DAP pathway; LL-2,6-diaminopimelate from (S)-tetrahydrodipicolinate (succinylase route): step 3/3. Catalyzes the hydrolysis of N-succinyl-L,L-diaminopimelic acid (SDAP), forming succinate and LL-2,6-diaminopimelate (DAP), an intermediate involved in the bacterial biosynthesis of lysine and meso-diaminopimelic acid, an essential component of bacterial cell walls. The sequence is that of Succinyl-diaminopimelate desuccinylase from Aromatoleum aromaticum (strain DSM 19018 / LMG 30748 / EbN1) (Azoarcus sp. (strain EbN1)).